A 291-amino-acid polypeptide reads, in one-letter code: Formamidopyrimidine-DNA glycosylase (291 aa).

The active-site Schiff-base intermediate with DNA is Pro2. Catalysis depends on Glu3, which acts as the Proton donor. The active-site Proton donor; for beta-elimination activity is Lys60. 2 residues coordinate DNA: His108 and Arg127. The FPG-type zinc-finger motif lies at 257–291; it reads WVYRRGGQACRICSTPIRRESLCGRGTHWCPNCQR. The active-site Proton donor; for delta-elimination activity is the Arg281.

Belongs to the FPG family. In terms of assembly, monomer. It depends on Zn(2+) as a cofactor.

The enzyme catalyses Hydrolysis of DNA containing ring-opened 7-methylguanine residues, releasing 2,6-diamino-4-hydroxy-5-(N-methyl)formamidopyrimidine.. The catalysed reaction is 2'-deoxyribonucleotide-(2'-deoxyribose 5'-phosphate)-2'-deoxyribonucleotide-DNA = a 3'-end 2'-deoxyribonucleotide-(2,3-dehydro-2,3-deoxyribose 5'-phosphate)-DNA + a 5'-end 5'-phospho-2'-deoxyribonucleoside-DNA + H(+). Involved in base excision repair of DNA damaged by oxidation or by mutagenic agents. Acts as a DNA glycosylase that recognizes and removes damaged bases. Has a preference for oxidized purines, such as 7,8-dihydro-8-oxoguanine (8-oxoG). Has AP (apurinic/apyrimidinic) lyase activity and introduces nicks in the DNA strand. Cleaves the DNA backbone by beta-delta elimination to generate a single-strand break at the site of the removed base with both 3'- and 5'-phosphates. In Prochlorococcus marinus (strain MIT 9313), this protein is Formamidopyrimidine-DNA glycosylase.